The chain runs to 446 residues: Exodeoxyribonuclease 7 large subunit (446 aa).

The protein belongs to the XseA family. As to quaternary structure, heterooligomer composed of large and small subunits.

The protein localises to the cytoplasm. It catalyses the reaction Exonucleolytic cleavage in either 5'- to 3'- or 3'- to 5'-direction to yield nucleoside 5'-phosphates.. Bidirectionally degrades single-stranded DNA into large acid-insoluble oligonucleotides, which are then degraded further into small acid-soluble oligonucleotides. This is Exodeoxyribonuclease 7 large subunit from Streptococcus thermophilus (strain CNRZ 1066).